A 196-amino-acid polypeptide reads, in one-letter code: Regulator of G-protein signaling 8 (196 aa).

S26 carries the post-translational modification Phosphoserine. Residues 72 to 188 (SFDVLLSHKY…LRSKMYLDLL (117 aa)) enclose the RGS domain.

Interacts with GNAO1 and GNAI3.

It is found in the cell membrane. The protein localises to the membrane. Its subcellular location is the perikaryon. It localises to the cell projection. The protein resides in the dendrite. It is found in the nucleus. Functionally, regulates G protein-coupled receptor signaling cascades, including signaling via muscarinic acetylcholine receptor CHRM2 and dopamine receptor DRD2. Inhibits signal transduction by increasing the GTPase activity of G protein alpha subunits, thereby driving them into their inactive GDP-bound form. Modulates the activity of potassium channels that are activated in response to DRD2 and CHRM2 signaling. The protein is Regulator of G-protein signaling 8 (RGS8) of Macaca fascicularis (Crab-eating macaque).